Reading from the N-terminus, the 1389-residue chain is uncharacterized protein (1389 aa).

The stretch at serine 43–aspartate 94 forms a coiled coil. The interval histidine 294–arginine 353 is disordered. 2 stretches are compositionally biased toward low complexity: residues serine 304–serine 314 and serine 322–cysteine 335. WD repeat units lie at residues threonine 867 to isoleucine 907, glycine 1017 to glycine 1056, and glycine 1115 to threonine 1156.

Its subcellular location is the virion. This is an uncharacterized protein from Acanthamoeba polyphaga (Amoeba).